Reading from the N-terminus, the 528-residue chain is Phosphoenolpyruvate carboxykinase (ATP) (528 aa).

Residues R56, Y192, and K198 each coordinate substrate. ATP contacts are provided by residues K198, H217, and 233–241 (GLSGTGKTT). Residues K198 and H217 each coordinate Mn(2+). Residue D254 participates in Mn(2+) binding. E282, R319, and T444 together coordinate ATP. R319 is a binding site for substrate.

This sequence belongs to the phosphoenolpyruvate carboxykinase (ATP) family. Mn(2+) serves as cofactor.

The protein localises to the cytoplasm. It catalyses the reaction oxaloacetate + ATP = phosphoenolpyruvate + ADP + CO2. It functions in the pathway carbohydrate biosynthesis; gluconeogenesis. Involved in the gluconeogenesis. Catalyzes the conversion of oxaloacetate (OAA) to phosphoenolpyruvate (PEP) through direct phosphoryl transfer between the nucleoside triphosphate and OAA. This Bacillus cereus (strain AH187) protein is Phosphoenolpyruvate carboxykinase (ATP).